The primary structure comprises 209 residues: Orotate phosphoribosyltransferase (209 aa).

5-phospho-alpha-D-ribose 1-diphosphate contacts are provided by residues Arg96, Lys100, His102, and Glu122–Ser130. Ser126 contributes to the orotate binding site.

The protein belongs to the purine/pyrimidine phosphoribosyltransferase family. PyrE subfamily. Homodimer. Mg(2+) serves as cofactor.

It catalyses the reaction orotidine 5'-phosphate + diphosphate = orotate + 5-phospho-alpha-D-ribose 1-diphosphate. Its pathway is pyrimidine metabolism; UMP biosynthesis via de novo pathway; UMP from orotate: step 1/2. In terms of biological role, catalyzes the transfer of a ribosyl phosphate group from 5-phosphoribose 1-diphosphate to orotate, leading to the formation of orotidine monophosphate (OMP). This Streptococcus pyogenes serotype M1 protein is Orotate phosphoribosyltransferase.